Here is a 299-residue protein sequence, read N- to C-terminus: uncharacterized protein (299 aa).

8 helical membrane passes run 13-33, 36-56, 79-99, 112-132, 151-171, 201-221, 241-261, and 267-287; these read ILFL…LHFM, AFVI…FLML, SFGI…VIII, TAIG…ISVI, ITSE…LFFI, FLIL…VILV, YVIL…MLLS, and PPGP…FLII.

This sequence belongs to the ABC-3 integral membrane protein family.

It is found in the plastid. The protein resides in the cyanelle membrane. This is an uncharacterized protein from Cyanophora paradoxa.